Consider the following 358-residue polypeptide: uncharacterized protein (358 aa).

Residue 207-214 (AAVKDGKT) coordinates ATP.

This is an uncharacterized protein from Bacillus subtilis (strain 168).